Here is a 40-residue protein sequence, read N- to C-terminus: uncharacterized protein (40 aa).

The signal sequence occupies residues 1 to 27 (MFPADVILQCFGFSVGIALVGYVISLF).

This is an uncharacterized protein from Archaeoglobus fulgidus (strain ATCC 49558 / DSM 4304 / JCM 9628 / NBRC 100126 / VC-16).